The primary structure comprises 74 residues: Large ribosomal subunit protein bL31 (74 aa).

Belongs to the bacterial ribosomal protein bL31 family. Type A subfamily. As to quaternary structure, part of the 50S ribosomal subunit.

In terms of biological role, binds the 23S rRNA. This chain is Large ribosomal subunit protein bL31, found in Phenylobacterium zucineum (strain HLK1).